Reading from the N-terminus, the 471-residue chain is ATP synthase subunit beta (471 aa).

Gly-157–Thr-164 contacts ATP.

It belongs to the ATPase alpha/beta chains family. As to quaternary structure, F-type ATPases have 2 components, CF(1) - the catalytic core - and CF(0) - the membrane proton channel. CF(1) has five subunits: alpha(3), beta(3), gamma(1), delta(1), epsilon(1). CF(0) has three main subunits: a(1), b(2) and c(9-12). The alpha and beta chains form an alternating ring which encloses part of the gamma chain. CF(1) is attached to CF(0) by a central stalk formed by the gamma and epsilon chains, while a peripheral stalk is formed by the delta and b chains.

It localises to the cell inner membrane. It carries out the reaction ATP + H2O + 4 H(+)(in) = ADP + phosphate + 5 H(+)(out). Produces ATP from ADP in the presence of a proton gradient across the membrane. The catalytic sites are hosted primarily by the beta subunits. The protein is ATP synthase subunit beta of Trichlorobacter lovleyi (strain ATCC BAA-1151 / DSM 17278 / SZ) (Geobacter lovleyi).